The primary structure comprises 191 residues: Protein Ves (191 aa).

This sequence belongs to the Ves family.

This Shigella flexneri serotype 5b (strain 8401) protein is Protein Ves.